The sequence spans 348 residues: MLLSILVALCLCVRLALGVRGAPCEAVRIPMCRHMPWNITRMPNHLHHSTQENAILAIEQYEELVDVNCSSVLRFFLCAMYAPICTLEFLHDPIKPCKSVCQRARDDCEPLMKMYNHSWPESLACDELPVYDRGVCISPEAIVTDLPEDVKWIDITPDMMVQERSFDADCKHLSPDRCKCKKVKPTLATYLSKNYSYVIHAKIKAVQRSGCNEVTTVVDVKEIFKSSSPIPRTQVPLITNSSCQCPHILPHQDVLIMCYERRSRMMLLENCLVEKWRDQLSRRSTQWEERLQEQQRTTQDKKQIASRTSRSNPPKPKGRSPASKPASPKKNIKARSAPKKSNPKKSTS.

The signal sequence occupies residues 1 to 18 (MLLSILVALCLCVRLALG). Positions 19 to 139 (VRGAPCEAVR…VYDRGVCISP (121 aa)) constitute an FZ domain. Disulfide bonds link Cys-24–Cys-85, Cys-32–Cys-78, Cys-69–Cys-108, Cys-97–Cys-136, and Cys-101–Cys-125. N-linked (GlcNAc...) asparagine glycosylation is found at Asn-38 and Asn-68. 3 N-linked (GlcNAc...) asparagine glycosylation sites follow: Asn-116, Asn-194, and Asn-240. Positions 178 to 296 (CKCKKVKPTL…WEERLQEQQR (119 aa)) constitute an NTR domain. A compositionally biased stretch (basic and acidic residues) spans 289–303 (ERLQEQQRTTQDKKQ). The segment at 289-348 (ERLQEQQRTTQDKKQIASRTSRSNPPKPKGRSPASKPASPKKNIKARSAPKKSNPKKSTS) is disordered. Over residues 330–348 (KNIKARSAPKKSNPKKSTS) the composition is skewed to basic residues.

The protein belongs to the secreted frizzled-related protein (sFRP) family. In terms of tissue distribution, expressed in the involuting mammary gland, ovarian corpus luteum and prostate. In ovaries, low levels found in granulosa cells. High levels in corpora lutea of pregnant animals.

The protein localises to the secreted. Its function is as follows. Soluble frizzled-related proteins (sFRPS) function as modulators of Wnt signaling through direct interaction with Wnts. They have a role in regulating cell growth and differentiation in specific cell types. SFRP4 plays a role in bone morphogenesis. May also act as a regulator of adult uterine morphology and function. May also increase apoptosis during ovulation possibly through modulation of FZ1/FZ4/WNT4 signaling. Has phosphaturic effects by specifically inhibiting sodium-dependent phosphate uptake. In Rattus norvegicus (Rat), this protein is Secreted frizzled-related protein 4 (Sfrp4).